A 408-amino-acid chain; its full sequence is Aminopeptidase T (408 aa).

E250, E316, E340, H345, H376, and D378 together coordinate a divalent metal cation.

Belongs to the peptidase M29 family. As to quaternary structure, homodimer. It depends on Co(2+) as a cofactor. Zn(2+) is required as a cofactor. Requires Mg(2+) as cofactor.

In terms of biological role, metal-dependent exopeptidase. The protein is Aminopeptidase T of Thermus aquaticus.